An 830-amino-acid polypeptide reads, in one-letter code: Heavy metal tolerance protein (830 aa).

Residues 1–27 (MVLRYNSPRLNILELVLLYVGFFSIGS) form the signal peptide. Helical transmembrane passes span 51–71 (PIGIISWWILGIALTYVVDIS), 88–108 (TTVVCLILFLLFWIIVLISCA), and 126–146 (LSVLYVWAIDIVFETIFIVYS). Asn-150 carries an N-linked (GlcNAc...) asparagine glycan. Helical transmembrane passes span 156–176 (IVLADHVARLVLCVFATAIYL), 263–283 (FQIFICIVLLFLGRAVNILAP), and 304–324 (DVILFVIYRFLQGNMGVIGSL). An ABC transmembrane type-1 domain is found at 265 to 550 (IFICIVLLFL…FGTLYRSLQN (286 aa)). A glycan (N-linked (GlcNAc...) asparagine) is linked at Asn-350. 2 consecutive transmembrane segments (helical) span residues 381-401 (VVFQIGPVLLDLGVAMVYFFI) and 403-423 (FDIYFTLIVLIMTLCYCYVTV). Glutathione is bound by residues 429-433 (RTEAR), 492-495 (NIVQ), and Gly-542. Residues 490 to 511 (FLNIVQGGIFTFSLAIACLLSA) traverse the membrane as a helical segment. The ABC transporter domain maps to 584–818 (VIFSHVSFAY…DGGAYKKMWF (235 aa)). ATP contacts are provided by residues Tyr-593 and 617–628 (GESGGGKSTIMR).

This sequence belongs to the ABC transporter superfamily. ABCB family. Heavy Metal importer (TC 3.A.1.210) subfamily.

Its subcellular location is the vacuole membrane. In terms of biological role, involved in metal tolerance. Probably involved in the transport of metal-bound phytochelatins. Compartmentalizes cadmium within vacuoles, thereby protecting cells from cadmium toxicity. The chain is Heavy metal tolerance protein (hmt1) from Schizosaccharomyces pombe (strain 972 / ATCC 24843) (Fission yeast).